We begin with the raw amino-acid sequence, 180 residues long: Adenine phosphoribosyltransferase (180 aa).

Residue S2 is modified to N-acetylserine. Residues S4, S15, and S30 each carry the phosphoserine modification. Y60 is modified (phosphotyrosine). At S66 the chain carries Phosphoserine. An N6-acetyllysine modification is found at K114. Residue T135 is modified to Phosphothreonine.

Belongs to the purine/pyrimidine phosphoribosyltransferase family. Homodimer.

Its subcellular location is the cytoplasm. It catalyses the reaction AMP + diphosphate = 5-phospho-alpha-D-ribose 1-diphosphate + adenine. The protein operates within purine metabolism; AMP biosynthesis via salvage pathway; AMP from adenine: step 1/1. Its function is as follows. Catalyzes a salvage reaction resulting in the formation of AMP, that is energically less costly than de novo synthesis. The chain is Adenine phosphoribosyltransferase from Mus pahari (Gairdner's shrew-mouse).